The primary structure comprises 211 residues: Metalloproteinase inhibitor 3 (211 aa).

The signal sequence occupies residues 1-23; that stretch reads MTPWLGLVVLLGSWSLGDWGAEA. Residue C24 participates in Zn(2+) binding. Involved in metalloproteinase-binding regions lie at residues 24–27 and 88–89; these read CTCS and ES. Intrachain disulfides connect C24/C91, C26/C118, C36/C143, C145/C192, C150/C155, and C163/C184. Residues 24 to 143 form the NTR domain; it reads CTCSPSHPQD…GLNYRYHLGC (120 aa). A mediates interaction with EFEMP1 region spans residues 105–188; the sequence is TGRVYDGKMY…SKHYACIRQK (84 aa). Residue N207 is glycosylated (N-linked (GlcNAc...) asparagine).

This sequence belongs to the protease inhibitor I35 (TIMP) family. In terms of assembly, interacts with EFEMP1. Interacts with KDR.

It localises to the secreted. It is found in the extracellular space. Its subcellular location is the extracellular matrix. Its function is as follows. Mediates a variety of processes including matrix regulation and turnover, inflammation, and angiogenesis, through reversible inhibition of zinc protease superfamily enzymes, primarily matrix metalloproteinases (MMPs). Regulates extracellular matrix (ECM) remodeling through inhibition of matrix metalloproteinases (MMP) including MMP-1, MMP-2, MMP-3, MMP-7, MMP-9, MMP-13, MMP-14 and MMP-15. Additionally, modulates the processing of amyloid precursor protein (APP) and apolipoprotein E receptor ApoER2 by inhibiting two alpha-secretases ADAM10 and ADAM17. Functions as a tumor suppressor and a potent inhibitor of angiogenesis. Exerts its anti-angiogenic effect by directly interacting with vascular endothelial growth factor (VEGF) receptor-2/KDR, preventing its binding to the VEGFA ligand. Selectively induces apoptosis in angiogenic endothelial cells through a caspase-independent cell death pathway. Mechanistically, inhibits matrix-induced focal adhesion kinase PTK2 tyrosine phosphorylation and association with paxillin/PXN and disrupts the incorporation of ITGB3, PTK2 and PXN into focal adhesion contacts on the matrix. The chain is Metalloproteinase inhibitor 3 (TIMP3) from Bos taurus (Bovine).